The primary structure comprises 323 residues: Serine/threonine-protein phosphatase PP1 (323 aa).

D63, H65, D91, and N123 together coordinate Mn(2+). The active-site Proton donor is H124. Mn(2+)-binding residues include H172 and H247.

The protein belongs to the PPP phosphatase family. PP-1 subfamily. Mn(2+) serves as cofactor.

It carries out the reaction O-phospho-L-seryl-[protein] + H2O = L-seryl-[protein] + phosphate. The catalysed reaction is O-phospho-L-threonyl-[protein] + H2O = L-threonyl-[protein] + phosphate. In terms of biological role, plays an important role in the control of mitosis by reversing the action of the nimA kinase. The chain is Serine/threonine-protein phosphatase PP1 (bimG) from Emericella nidulans (strain FGSC A4 / ATCC 38163 / CBS 112.46 / NRRL 194 / M139) (Aspergillus nidulans).